Reading from the N-terminus, the 100-residue chain is Enhancer of yellow 2 transcription factor (100 aa).

It belongs to the ENY2 family. As to quaternary structure, component of the nuclear pore complex (NPC)-associated AMEX complex (anchoring and mRNA export complex), composed of at least e(y)2 and xmas-2. Component of the SAGA transcription coactivator-HAT complexes, at least composed of Ada2b, e(y)2, Pcaf/Gcn5, Taf10 and Nipped-A/Trrap. Within the SAGA complex, e(y)2, Sgf11, and not/nonstop form an additional subcomplex of SAGA called the DUB module (deubiquitination module). Component of the THO complex, composed of at least e(y)2, HPR1, THO2, THOC5, THOC6 and THOC7. Interacts with e(y)1. Interacts with su(Hw) (via zinc fingers). Interacts with xmas-2; required for localization to the nuclear periphery. Interacts with the nuclear pore complex (NPC).

It localises to the nucleus. It is found in the nucleoplasm. The protein localises to the cytoplasm. Involved in mRNA export coupled transcription activation by association with both the AMEX and the SAGA complexes. The SAGA complex is a multiprotein complex that activates transcription by remodeling chromatin and mediating histone acetylation and deubiquitination. Within the SAGA complex, participates in a subcomplex that specifically deubiquitinates histone H2B. The SAGA complex is recruited to specific gene promoters by activators, where it is required for transcription. Required for nuclear receptor-mediated transactivation. Involved in transcription elongation by recruiting the THO complex onto nascent mRNA. The AMEX complex functions in docking export-competent ribonucleoprotein particles (mRNPs) to the nuclear entrance of the nuclear pore complex (nuclear basket). AMEX participates in mRNA export and accurate chromatin positioning in the nucleus by tethering genes to the nuclear periphery. The protein is Enhancer of yellow 2 transcription factor of Drosophila persimilis (Fruit fly).